A 319-amino-acid polypeptide reads, in one-letter code: MSDYQVLLYYKYTTIDDPETFAKEHLAACKEMELKGRILVASEGINGTVSGTVEATNKYMDYMANDARFADMVFKIDAADSHAFKKMHVRPRAEIVSLSLEEDVNPLEVTGTYLEPTEFREALLDEDTVILDARNDYEFDIGHFRGAVRPDIQNFRELPGWIEENRDQLADKKIVTYCTGGIRCEKFSGWLKTAGFEDVSQLHGGIATYGKNEETKGELWDGQMYVFDERIAVPINQVNPTIVGKDYFDGTPCERYINCANPYCNKQILASIENEEKYLRSCSHECRVHPANLYTKELSKEEFTERLQAISETSPEMVQ.

In terms of domain architecture, Rhodanese spans 124–218 (LDEDTVILDA…YGKNEETKGE (95 aa)). Residue Cys178 is the Cysteine persulfide intermediate of the active site.

This sequence belongs to the TrhO family.

It carries out the reaction uridine(34) in tRNA + AH2 + O2 = 5-hydroxyuridine(34) in tRNA + A + H2O. In terms of biological role, catalyzes oxygen-dependent 5-hydroxyuridine (ho5U) modification at position 34 in tRNAs. This is tRNA uridine(34) hydroxylase from Listeria welshimeri serovar 6b (strain ATCC 35897 / DSM 20650 / CCUG 15529 / CIP 8149 / NCTC 11857 / SLCC 5334 / V8).